The following is a 201-amino-acid chain: MNNQIFSPKITAVIESLRKLPTIGKKSSQRLALYLLDKSPETAITIANSLLDAAENIKKCKYCQSLTEKDVCDICGSQNRDESKLCIIESMLDLVAIEEAGFFKGKYFVLNGRISPLDGIGPNELKLDILEQIIINREINEIILAISPTVEGETTAHFISQMIGKDIKISRIGFGVPFGGELEYLDQQTLIHAFNARTNIK.

Residues 60 to 75 form a C4-type zinc finger; it reads CKYCQSLTEKDVCDIC. The 95-residue stretch at 83–177 folds into the Toprim domain; that stretch reads SKLCIIESML…KISRIGFGVP (95 aa).

The protein belongs to the RecR family.

Its function is as follows. May play a role in DNA repair. It seems to be involved in an RecBC-independent recombinational process of DNA repair. It may act with RecF and RecO. The polypeptide is Recombination protein RecR (Francisella philomiragia subsp. philomiragia (strain ATCC 25017 / CCUG 19701 / FSC 153 / O#319-036)).